A 394-amino-acid chain; its full sequence is Elongation factor Tu (394 aa).

Positions 10–204 (KAHVNIGTIG…SVDSYIPTPT (195 aa)) constitute a tr-type G domain. The G1 stretch occupies residues 19-26 (GHIDHGKT). 19 to 26 (GHIDHGKT) is a GTP binding site. Mg(2+) is bound at residue T26. Residues 60 to 64 (GITIN) are G2. Residues 81–84 (DCPG) are G3. Residues 81–85 (DCPGH) and 136–139 (NKCD) each bind GTP. A G4 region spans residues 136–139 (NKCD). The G5 stretch occupies residues 174 to 176 (SAL).

It belongs to the TRAFAC class translation factor GTPase superfamily. Classic translation factor GTPase family. EF-Tu/EF-1A subfamily. Monomer.

The protein resides in the cytoplasm. It catalyses the reaction GTP + H2O = GDP + phosphate + H(+). Functionally, GTP hydrolase that promotes the GTP-dependent binding of aminoacyl-tRNA to the A-site of ribosomes during protein biosynthesis. This is Elongation factor Tu from Malacoplasma penetrans (strain HF-2) (Mycoplasma penetrans).